The chain runs to 469 residues: DENN domain-containing protein 2D (469 aa).

Residues 17–44 (LPRLRAGQSQNNPGEAVTEPERIQEHSP) are disordered. The uDENN domain maps to 55–204 (EYLLVVSLKK…AFPAPGKTVT (150 aa)). The cDENN domain maps to 226 to 359 (HLEHVDFSVL…LQDDILDSLG (134 aa)). The region spanning 361-445 (GINELKTSEQ…QEAEKSRNPP (85 aa)) is the dDENN domain.

The protein localises to the cytoplasm. Functionally, guanine nucleotide exchange factor (GEF) which may activate RAB9A and RAB9B. Promotes the exchange of GDP to GTP, converting inactive GDP-bound Rab proteins into their active GTP-bound form. This Mus musculus (Mouse) protein is DENN domain-containing protein 2D (Dennd2d).